The primary structure comprises 608 residues: Thiol:disulfide interchange protein DsbD (608 aa).

Positions 1–22 are cleaved as a signal peptide; the sequence is MKNLLSLCFLMLAAFTLNPAAA. A disulfide bridge links C135 with C141. Positions 161–173 are enriched in polar residues; it reads SAPSSDAAQQTNE. The tract at residues 161–180 is disordered; that stretch reads SAPSSDAAQQTNEGEVKKSE. A run of 8 helical transmembrane segments spans residues 194–214, 241–261, 273–293, 314–334, 352–372, 387–407, 414–434, and 456–476; these read LLTL…PCVF, FFYV…VAMA, IVLI…FGVF, GGSI…ASPC, VVLG…PLLI, WMNI…VFLL, VASQ…FYVA, and SLVI…LIYP. Cysteines 212 and 334 form a disulfide. Positions 469-608 constitute a Thioredoxin domain; that stretch reads LAYQLIYPSS…FSAHVKSIFK (140 aa). C522 and C525 are joined by a disulfide.

This sequence belongs to the thioredoxin family. DsbD subfamily.

The protein resides in the cell inner membrane. The enzyme catalyses [protein]-dithiol + NAD(+) = [protein]-disulfide + NADH + H(+). It carries out the reaction [protein]-dithiol + NADP(+) = [protein]-disulfide + NADPH + H(+). Its function is as follows. Required to facilitate the formation of correct disulfide bonds in some periplasmic proteins and for the assembly of the periplasmic c-type cytochromes. Acts by transferring electrons from cytoplasmic thioredoxin to the periplasm. This transfer involves a cascade of disulfide bond formation and reduction steps. The protein is Thiol:disulfide interchange protein DsbD of Colwellia psychrerythraea (strain 34H / ATCC BAA-681) (Vibrio psychroerythus).